Consider the following 149-residue polypeptide: Nucleoside diphosphate kinase (149 aa).

ATP-binding residues include lysine 9, phenylalanine 57, arginine 85, threonine 91, arginine 102, and asparagine 112. The active-site Pros-phosphohistidine intermediate is histidine 115.

Belongs to the NDK family. The cofactor is Mg(2+).

It localises to the cytoplasm. It catalyses the reaction a 2'-deoxyribonucleoside 5'-diphosphate + ATP = a 2'-deoxyribonucleoside 5'-triphosphate + ADP. It carries out the reaction a ribonucleoside 5'-diphosphate + ATP = a ribonucleoside 5'-triphosphate + ADP. Functionally, major role in the synthesis of nucleoside triphosphates other than ATP. The ATP gamma phosphate is transferred to the NDP beta phosphate via a ping-pong mechanism, using a phosphorylated active-site intermediate. In Methanosarcina barkeri (strain Fusaro / DSM 804), this protein is Nucleoside diphosphate kinase.